A 105-amino-acid chain; its full sequence is Protein RALF-like 21 (105 aa).

The first 30 residues, 1–30, serve as a signal peptide directing secretion; sequence MSNMKITNRFMLVATFIACVFISSMNMTVG. Intrachain disulfides connect Cys44–Cys53 and Cys67–Cys73.

It belongs to the plant rapid alkalinization factor (RALF) family. In terms of tissue distribution, expressed in seeds and rosettes.

The protein resides in the secreted. In terms of biological role, cell signaling peptide that may regulate plant stress, growth, and development. Mediates a rapid alkalinization of extracellular space by mediating a transient increase in the cytoplasmic Ca(2+) concentration leading to a calcium-dependent signaling events through a cell surface receptor and a concomitant activation of some intracellular mitogen-activated protein kinases. This chain is Protein RALF-like 21 (RALFL21), found in Arabidopsis thaliana (Mouse-ear cress).